Consider the following 405-residue polypeptide: 1-deoxy-D-xylulose 5-phosphate reductoisomerase (405 aa).

NADPH-binding residues include threonine 16, glycine 17, serine 18, isoleucine 19, glycine 42, arginine 43, asparagine 44, and asparagine 130. Lysine 131 lines the 1-deoxy-D-xylulose 5-phosphate pocket. NADPH is bound at residue glutamate 132. A Mn(2+)-binding site is contributed by aspartate 156. Residues serine 157, glutamate 158, serine 192, and histidine 215 each contribute to the 1-deoxy-D-xylulose 5-phosphate site. A Mn(2+)-binding site is contributed by glutamate 158. Glycine 221 serves as a coordination point for NADPH. 4 residues coordinate 1-deoxy-D-xylulose 5-phosphate: serine 228, asparagine 233, lysine 234, and glutamate 237. Position 237 (glutamate 237) interacts with Mn(2+).

Belongs to the DXR family. Mg(2+) serves as cofactor. Requires Mn(2+) as cofactor.

The catalysed reaction is 2-C-methyl-D-erythritol 4-phosphate + NADP(+) = 1-deoxy-D-xylulose 5-phosphate + NADPH + H(+). It participates in isoprenoid biosynthesis; isopentenyl diphosphate biosynthesis via DXP pathway; isopentenyl diphosphate from 1-deoxy-D-xylulose 5-phosphate: step 1/6. Functionally, catalyzes the NADPH-dependent rearrangement and reduction of 1-deoxy-D-xylulose-5-phosphate (DXP) to 2-C-methyl-D-erythritol 4-phosphate (MEP). This is 1-deoxy-D-xylulose 5-phosphate reductoisomerase from Pasteurella multocida (strain Pm70).